Here is a 270-residue protein sequence, read N- to C-terminus: MKMTSKKMKDELIKKLSRPEWDFQYDSEKEVLRIEQKDSKKGINVSLPGVVAKWEVNKEKAIEEVAYYVQEALIAMHKEENSGAKILPVIRSTSFPKQAEEGNPFIMTDHTAETRIYYALDSNKTYRLIDERLLQKLELTEQQVREMALFNARSLGYEFKQDTVAGNTFYFLNTNDGYDATRILNESLLQSMREKISGDMVVAVPHQDVLIIADIVNEIGYDIIAQMTMKFFAEGHVPITSLSFVYEDGEFEPIFILAKNRKKTDGKEKG.

Belongs to the UPF0354 family.

The chain is UPF0354 protein BC_4690 from Bacillus cereus (strain ATCC 14579 / DSM 31 / CCUG 7414 / JCM 2152 / NBRC 15305 / NCIMB 9373 / NCTC 2599 / NRRL B-3711).